The following is a 346-amino-acid chain: Thiamine-phosphate synthase (346 aa).

The tract at residues 1–125 (MSVTPNPDQH…SKISAQIRYE (125 aa)) is unknown. Residues 126–346 (IYDLEVIILK…SKELLGKLKK (221 aa)) form a thiamine-phosphate synthase region. 4-amino-2-methyl-5-(diphosphooxymethyl)pyrimidine is bound by residues 177 to 181 (QYRCK) and Asn-209. The Mg(2+) site is built by Asp-210 and Asp-229. A 4-amino-2-methyl-5-(diphosphooxymethyl)pyrimidine-binding site is contributed by Ser-248. 274 to 276 (TKS) is a 2-[(2R,5Z)-2-carboxy-4-methylthiazol-5(2H)-ylidene]ethyl phosphate binding site. Lys-277 is a 4-amino-2-methyl-5-(diphosphooxymethyl)pyrimidine binding site. A 2-[(2R,5Z)-2-carboxy-4-methylthiazol-5(2H)-ylidene]ethyl phosphate-binding site is contributed by Gly-304.

Belongs to the thiamine-phosphate synthase family. Mg(2+) is required as a cofactor.

The catalysed reaction is 2-[(2R,5Z)-2-carboxy-4-methylthiazol-5(2H)-ylidene]ethyl phosphate + 4-amino-2-methyl-5-(diphosphooxymethyl)pyrimidine + 2 H(+) = thiamine phosphate + CO2 + diphosphate. It catalyses the reaction 2-(2-carboxy-4-methylthiazol-5-yl)ethyl phosphate + 4-amino-2-methyl-5-(diphosphooxymethyl)pyrimidine + 2 H(+) = thiamine phosphate + CO2 + diphosphate. It carries out the reaction 4-methyl-5-(2-phosphooxyethyl)-thiazole + 4-amino-2-methyl-5-(diphosphooxymethyl)pyrimidine + H(+) = thiamine phosphate + diphosphate. The protein operates within cofactor biosynthesis; thiamine diphosphate biosynthesis; thiamine phosphate from 4-amino-2-methyl-5-diphosphomethylpyrimidine and 4-methyl-5-(2-phosphoethyl)-thiazole: step 1/1. Condenses 4-methyl-5-(beta-hydroxyethyl)thiazole monophosphate (THZ-P) and 2-methyl-4-amino-5-hydroxymethyl pyrimidine pyrophosphate (HMP-PP) to form thiamine monophosphate (TMP). The protein is Thiamine-phosphate synthase of Prochlorococcus marinus (strain SARG / CCMP1375 / SS120).